We begin with the raw amino-acid sequence, 85 residues long: Large ribosomal subunit protein bL27 (85 aa).

Positions 1 to 25 are disordered; the sequence is MAHKKAGSSSKNGRDSNPQYLGVKR. The segment covering 7–19 has biased composition (polar residues); it reads GSSSKNGRDSNPQ.

This sequence belongs to the bacterial ribosomal protein bL27 family.

The polypeptide is Large ribosomal subunit protein bL27 (Micrococcus luteus (strain ATCC 4698 / DSM 20030 / JCM 1464 / CCM 169 / CCUG 5858 / IAM 1056 / NBRC 3333 / NCIMB 9278 / NCTC 2665 / VKM Ac-2230) (Micrococcus lysodeikticus)).